Reading from the N-terminus, the 377-residue chain is tRNA-specific 2-thiouridylase MnmA (377 aa).

ATP-binding positions include 8-15 (GMSGGVDS) and Met-34. The interaction with target base in tRNA stretch occupies residues 94–96 (NPD). The active-site Nucleophile is Cys-99. The cysteines at positions 99 and 201 are disulfide-linked. Gly-123 contacts ATP. The interval 151-153 (KDQ) is interaction with tRNA. Catalysis depends on Cys-201, which acts as the Cysteine persulfide intermediate. Positions 315–316 (RY) are interaction with tRNA.

This sequence belongs to the MnmA/TRMU family.

Its subcellular location is the cytoplasm. It carries out the reaction S-sulfanyl-L-cysteinyl-[protein] + uridine(34) in tRNA + AH2 + ATP = 2-thiouridine(34) in tRNA + L-cysteinyl-[protein] + A + AMP + diphosphate + H(+). Functionally, catalyzes the 2-thiolation of uridine at the wobble position (U34) of tRNA, leading to the formation of s(2)U34. The polypeptide is tRNA-specific 2-thiouridylase MnmA (Acinetobacter baumannii (strain SDF)).